The chain runs to 189 residues: Cancer/testis antigen family 45 member A3 (189 aa).

The tract at residues 81 to 119 is disordered; the sequence is KDRMMQKPGSNAPVGGNVTSSFSGDDLECRETASSPKSQ.

It belongs to the CT45 family. As to expression, testis specific. Expressed in cancer cell lines.

It localises to the nucleus. The protein is Cancer/testis antigen family 45 member A3 of Homo sapiens (Human).